The sequence spans 156 residues: Small ribosomal subunit protein uS7 (156 aa).

The protein belongs to the universal ribosomal protein uS7 family. Part of the 30S ribosomal subunit. Contacts proteins S9 and S11.

In terms of biological role, one of the primary rRNA binding proteins, it binds directly to 16S rRNA where it nucleates assembly of the head domain of the 30S subunit. Is located at the subunit interface close to the decoding center, probably blocks exit of the E-site tRNA. The protein is Small ribosomal subunit protein uS7 of Cupriavidus metallidurans (strain ATCC 43123 / DSM 2839 / NBRC 102507 / CH34) (Ralstonia metallidurans).